The primary structure comprises 496 residues: Glutamate--tRNA ligase (496 aa).

Positions 12-22 (PSPTGTPHVGL) match the 'HIGH' region motif. Residues 256 to 260 (KLSKR) carry the 'KMSKS' region motif. Residue Lys259 coordinates ATP.

It belongs to the class-I aminoacyl-tRNA synthetase family. Glutamate--tRNA ligase type 1 subfamily. As to quaternary structure, monomer.

The protein resides in the cytoplasm. It carries out the reaction tRNA(Glu) + L-glutamate + ATP = L-glutamyl-tRNA(Glu) + AMP + diphosphate. In terms of biological role, catalyzes the attachment of glutamate to tRNA(Glu) in a two-step reaction: glutamate is first activated by ATP to form Glu-AMP and then transferred to the acceptor end of tRNA(Glu). This chain is Glutamate--tRNA ligase, found in Mycobacteroides abscessus (strain ATCC 19977 / DSM 44196 / CCUG 20993 / CIP 104536 / JCM 13569 / NCTC 13031 / TMC 1543 / L948) (Mycobacterium abscessus).